Here is a 406-residue protein sequence, read N- to C-terminus: CinA-like protein (406 aa).

This sequence belongs to the CinA family.

The polypeptide is CinA-like protein (Deinococcus geothermalis (strain DSM 11300 / CIP 105573 / AG-3a)).